Here is a 187-residue protein sequence, read N- to C-terminus: MSRIGKRPITVPKGVQVTIGEQNLVTVKGPKGTLSQQLHPEMIIRQEGDVITVQRPSDGKLHRALHGLTRTLIHNMVVGVTQGWQRALEINGVGYRAQLEGKTLVLNLGFSHPVRIEPPPNISYIVGERKSANDPLALTVVGIDKQQVGEEAARIRSLRPPEPYKGKGIKYAEEKIRRKAGKAGKAK.

A disordered region spans residues 151 to 170 (EAARIRSLRPPEPYKGKGIK).

This sequence belongs to the universal ribosomal protein uL6 family. Part of the 50S ribosomal subunit.

This protein binds to the 23S rRNA, and is important in its secondary structure. It is located near the subunit interface in the base of the L7/L12 stalk, and near the tRNA binding site of the peptidyltransferase center. This is Large ribosomal subunit protein uL6 from Chloroflexus aurantiacus (strain ATCC 29366 / DSM 635 / J-10-fl).